The chain runs to 29 residues: Snaclec multactivase regulatory subunit (29 aa).

The C-type lectin domain maps to 1-29 (DCLPGWSVYEGRCYKVFNQKTWKAAEKFC). A disulfide bond links Cys-2 and Cys-13.

Belongs to the snaclec family. In terms of assembly, heterodimer of a metalloproteinase subunit and a regulatory subunit comprising two homologous polypeptides disulfide-linked. As to expression, expressed by the venom gland.

It is found in the secreted. Functionally, multactivase, a carinactivase-like calcium-dependent prothrombin activator, activates prothrombin via recognition of the calcium ion bound conformation of its gamma-carboxyglutamic acid (GLA) domain, and the subsequent conversion of prothrombin to active thrombin is catalyzed by the catalytic subunit. This Echis multisquamatus (Central Asian sand viper) protein is Snaclec multactivase regulatory subunit.